A 309-amino-acid chain; its full sequence is Protease HtpX homolog (309 aa).

A run of 2 helical transmembrane segments spans residues 7–27 (AILLAGLTALFMGVGYLIGGA) and 28–48 (SGAMIALVVAAATNIFAYWNS). His-130 provides a ligand contact to Zn(2+). Residue Glu-131 is part of the active site. His-134 contributes to the Zn(2+) binding site. 2 helical membrane-spanning segments follow: residues 145-165 (VTATIAGAVSMLAQFGMFFGG) and 173-193 (GLGVIGSIAMMILAPIAAMLV). Residue Glu-202 participates in Zn(2+) binding.

This sequence belongs to the peptidase M48B family. Requires Zn(2+) as cofactor.

It is found in the cell inner membrane. The sequence is that of Protease HtpX homolog from Rhodopseudomonas palustris (strain BisA53).